The following is a 288-amino-acid chain: Bifunctional protein FolD (288 aa).

Residues 166 to 168 (GRS), S191, and V232 contribute to the NADP(+) site.

This sequence belongs to the tetrahydrofolate dehydrogenase/cyclohydrolase family. As to quaternary structure, homodimer.

It catalyses the reaction (6R)-5,10-methylene-5,6,7,8-tetrahydrofolate + NADP(+) = (6R)-5,10-methenyltetrahydrofolate + NADPH. The enzyme catalyses (6R)-5,10-methenyltetrahydrofolate + H2O = (6R)-10-formyltetrahydrofolate + H(+). Its pathway is one-carbon metabolism; tetrahydrofolate interconversion. Its function is as follows. Catalyzes the oxidation of 5,10-methylenetetrahydrofolate to 5,10-methenyltetrahydrofolate and then the hydrolysis of 5,10-methenyltetrahydrofolate to 10-formyltetrahydrofolate. In Roseiflexus sp. (strain RS-1), this protein is Bifunctional protein FolD.